The sequence spans 139 residues: D-ribose pyranase (139 aa).

Histidine 20 (proton donor) is an active-site residue. Substrate contacts are provided by residues aspartate 28, histidine 106, and 128-130 (YAN).

It belongs to the RbsD / FucU family. RbsD subfamily. Homodecamer.

It is found in the cytoplasm. It carries out the reaction beta-D-ribopyranose = beta-D-ribofuranose. Its pathway is carbohydrate metabolism; D-ribose degradation; D-ribose 5-phosphate from beta-D-ribopyranose: step 1/2. Functionally, catalyzes the interconversion of beta-pyran and beta-furan forms of D-ribose. The chain is D-ribose pyranase from Aliivibrio fischeri (strain MJ11) (Vibrio fischeri).